An 88-amino-acid polypeptide reads, in one-letter code: Gene 86 protein (88 aa).

In Mycobacterium phage D29 (Mycobacteriophage D29), this protein is Gene 86 protein (86).